Reading from the N-terminus, the 1663-residue chain is Cortactin-binding protein 2 (1663 aa).

5 disordered regions span residues 1-23 (MATDGASCEPDLSRAPEDAAGAA), 203-222 (KKKTNELEEELSAEKRRSTE), 367-440 (GASV…LHPG), 454-478 (GNANDPDQNGNTTQSPPSRDVSPTS), and 498-614 (RFTS…LPPK). A coiled-coil region spans residues 119-276 (KKMQERMSAQ…EQLKKGSDSK (158 aa)). Over residues 386–396 (PSTGSTSDPTS) the composition is skewed to low complexity. Arginine 498 carries the post-translational modification Asymmetric dimethylarginine. Positions 583 to 593 (TVASTPSSLPQ) are enriched in polar residues. ANK repeat units lie at residues 709–739 (GRPTLLQQAAAQGNVTLLSMLLNEEGLDINY), 743–772 (DGHSALYSAAKNGHTDCVRLLLSAEAQVNA), 776–805 (NGFTPLCAAAAQGHFECVELLISYDANINH), 809–838 (GGQTPLYLACKNGNKECIKLLLEAGTNRSV), 842–871 (DGWTPVHAAVDTGNVDSLKLLMYHRIPAHG), and 912–942 (EGWTAAHIAASKGFKNCLEILCRHGGLEPER). The tract at residues 1448–1483 (KKGESGAWRKVNTSPRRKSGRFSLPTWNKPDLSTEG) is disordered. A Phosphoserine modification is found at serine 1524. A disordered region spans residues 1560-1663 (DSSGNNPVLS…KNGHLEKPNK (104 aa)). Composition is skewed to polar residues over residues 1561–1574 (SSGNNPVLSATINN) and 1582–1599 (KEVSPLSSHQTTECSNSK). Low complexity predominate over residues 1624-1638 (SQNTKRSSSSSNTRQ). Basic and acidic residues predominate over residues 1645 to 1663 (SKEENWNLHKNGHLEKPNK).

As to quaternary structure, interacts with CTTN/cortactin SH3 domain. Interacts with STRN, STRN4/zinedin and MOB4/phocein; this interactions mediate the association with the STRIPAK core complex and may regulate dendritic spine distribution of the STRIPAK complex in hippocampal neurons. Activation of glutamate receptors weakens the interaction with STRN and STRN4.

It is found in the cytoplasm. Its subcellular location is the cell cortex. The protein resides in the cell projection. The protein localises to the dendritic spine. In terms of biological role, regulates the dendritic spine distribution of CTTN/cortactin in hippocampal neurons, and thus controls dendritic spinogenesis and dendritic spine maintenance. Associates with the striatin-interacting phosphatase and kinase (STRIPAK) core complex to regulate dendritic spine distribution of the STRIPAK complex in hippocampal neurons. This Gorilla gorilla gorilla (Western lowland gorilla) protein is Cortactin-binding protein 2 (CTTNBP2).